Consider the following 432-residue polypeptide: Adenylosuccinate synthetase (432 aa).

Residues 13–19 (GDEGKGK) and 41–43 (GHT) contribute to the GTP site. Asp-14 functions as the Proton acceptor in the catalytic mechanism. The Mg(2+) site is built by Asp-14 and Gly-41. Residues 14–17 (DEGK), 39–42 (NAGH), Thr-130, Arg-144, Gln-225, Thr-240, and Arg-304 contribute to the IMP site. His-42 acts as the Proton donor in catalysis. 300–306 (AVTGRPR) lines the substrate pocket. Residues Arg-306, 332–334 (KLD), and 415–417 (STG) contribute to the GTP site.

It belongs to the adenylosuccinate synthetase family. In terms of assembly, homodimer. Requires Mg(2+) as cofactor.

It localises to the cytoplasm. The enzyme catalyses IMP + L-aspartate + GTP = N(6)-(1,2-dicarboxyethyl)-AMP + GDP + phosphate + 2 H(+). It participates in purine metabolism; AMP biosynthesis via de novo pathway; AMP from IMP: step 1/2. Functionally, plays an important role in the de novo pathway of purine nucleotide biosynthesis. Catalyzes the first committed step in the biosynthesis of AMP from IMP. The chain is Adenylosuccinate synthetase from Histophilus somni (strain 129Pt) (Haemophilus somnus).